A 270-amino-acid polypeptide reads, in one-letter code: Electron transfer flavoprotein subunit beta (270 aa).

This sequence belongs to the ETF alpha-subunit/FixB family. In terms of assembly, heterodimer of an alpha and a beta subunit. The cofactor is FAD.

In terms of biological role, the electron transfer flavoprotein serves as a specific electron acceptor for other dehydrogenases. It transfers the electrons to the main respiratory chain via ETF-ubiquinone oxidoreductase (ETF dehydrogenase). This chain is Electron transfer flavoprotein subunit beta (etfB), found in Megasphaera elsdenii.